Reading from the N-terminus, the 532-residue chain is Fe-S cluster assembly factor HCF101, chloroplastic (532 aa).

The N-terminal 61 residues, methionine 1–lysine 61, are a transit peptide targeting the chloroplast. At alanine 62 the chain carries N-acetylalanine. Cysteine 184–serine 191 lines the ATP pocket.

Belongs to the Mrp/NBP35 ATP-binding proteins family. The cofactor is [4Fe-4S] cluster. Expressed in aerial tissues exposed to light. Very low expression in roots.

It localises to the plastid. The protein resides in the chloroplast stroma. Functionally, required for photosystem I (PSI) biosynthesis and assembly. May serve as a chloroplast scaffold protein that specifically assembles iron-sulfur (4Fe-4S) clusters and transfers them to the chloroplast PSI and ferredoxin-thioredoxin (FTR) complexes. Can assemble a 4Fe-4S cluster and transfer it to apoproteins in yeast cells. Probably not required for assembly or stability of plastidic 2Fe-2S clusters. The sequence is that of Fe-S cluster assembly factor HCF101, chloroplastic (HCF101) from Arabidopsis thaliana (Mouse-ear cress).